Consider the following 694-residue polypeptide: Methionine--tRNA ligase (694 aa).

Positions 12–22 (PYANGPLHLGH) match the 'HIGH' region motif. Zn(2+) contacts are provided by Cys-143, Cys-146, Cys-156, and Cys-159. The short motif at 330–334 (KMSKS) is the 'KMSKS' region element. An ATP-binding site is contributed by Lys-333. Low complexity predominate over residues 550–573 (MAAPAAPATTTKPAPSKADAKPAA). The disordered stretch occupies residues 550 to 582 (MAAPAAPATTTKPAPSKADAKPAAVANPESQTT). In terms of domain architecture, tRNA-binding spans 591 to 694 (DFAKLDLRIG…SGAQPGMPVR (104 aa)).

It belongs to the class-I aminoacyl-tRNA synthetase family. MetG type 1 subfamily. As to quaternary structure, homodimer. Zn(2+) serves as cofactor.

The protein localises to the cytoplasm. It carries out the reaction tRNA(Met) + L-methionine + ATP = L-methionyl-tRNA(Met) + AMP + diphosphate. Is required not only for elongation of protein synthesis but also for the initiation of all mRNA translation through initiator tRNA(fMet) aminoacylation. The sequence is that of Methionine--tRNA ligase from Xanthomonas euvesicatoria pv. vesicatoria (strain 85-10) (Xanthomonas campestris pv. vesicatoria).